Reading from the N-terminus, the 59-residue chain is Small, acid-soluble spore protein H 2 (59 aa).

The protein belongs to the SspH family.

The protein localises to the spore core. The sequence is that of Small, acid-soluble spore protein H 2 (sspH2) from Bacillus cereus (strain ATCC 14579 / DSM 31 / CCUG 7414 / JCM 2152 / NBRC 15305 / NCIMB 9373 / NCTC 2599 / NRRL B-3711).